The sequence spans 356 residues: UDP-N-acetylenolpyruvoylglucosamine reductase (356 aa).

Residues leucine 19 to serine 227 form the FAD-binding PCMH-type domain. Arginine 167 is an active-site residue. The active-site Proton donor is serine 244. Glutamate 348 is an active-site residue.

It belongs to the MurB family. Requires FAD as cofactor.

The protein resides in the cytoplasm. It carries out the reaction UDP-N-acetyl-alpha-D-muramate + NADP(+) = UDP-N-acetyl-3-O-(1-carboxyvinyl)-alpha-D-glucosamine + NADPH + H(+). It functions in the pathway cell wall biogenesis; peptidoglycan biosynthesis. Cell wall formation. This chain is UDP-N-acetylenolpyruvoylglucosamine reductase, found in Thermobifida fusca (strain YX).